Reading from the N-terminus, the 392-residue chain is Stilbene synthase 2 (392 aa).

Residue 55-58 (KFNR) coordinates substrate. The active site involves C164. Substrate-binding positions include L267 and 305–307 (GGP).

It belongs to the thiolase-like superfamily. Chalcone/stilbene synthases family. In terms of assembly, homodimer.

The protein resides in the cytoplasm. It carries out the reaction 4-coumaroyl-CoA + 3 malonyl-CoA + 3 H(+) = trans-resveratrol + 4 CO2 + 4 CoA. The protein operates within phytoalexin biosynthesis; 3,4',5-trihydroxystilbene biosynthesis; 3,4',5-trihydroxystilbene from trans-4-coumarate: step 2/2. Mediates resistance to pathogens which are sensitive to stilbenes. In Vitis vinifera (Grape), this protein is Stilbene synthase 2.